The following is a 118-amino-acid chain: Small ribosomal subunit protein uS13 (118 aa).

The tract at residues 94 to 118 is disordered; sequence GLPVRGQRTQTNARTRKGPRRLARK. The span at 107–118 shows a compositional bias: basic residues; that stretch reads RTRKGPRRLARK.

The protein belongs to the universal ribosomal protein uS13 family. Part of the 30S ribosomal subunit. Forms a loose heterodimer with protein S19. Forms two bridges to the 50S subunit in the 70S ribosome.

Its function is as follows. Located at the top of the head of the 30S subunit, it contacts several helices of the 16S rRNA. In the 70S ribosome it contacts the 23S rRNA (bridge B1a) and protein L5 of the 50S subunit (bridge B1b), connecting the 2 subunits; these bridges are implicated in subunit movement. Contacts the tRNAs in the A and P-sites. This chain is Small ribosomal subunit protein uS13, found in Nitrosococcus oceani (strain ATCC 19707 / BCRC 17464 / JCM 30415 / NCIMB 11848 / C-107).